An 80-amino-acid chain; its full sequence is Ubiquinol-cytochrome c reductase complex assembly factor 5 (80 aa).

Residues 1–19 lie on the Mitochondrial matrix side of the membrane; sequence MFSRAQVRRALQRVPGKQR. The chain crosses the membrane as a helical span at residues 20–41; sequence FGIYRFLPFFFVLGGAMEWIMI. At 42–80 the chain is on the mitochondrial intermembrane side; it reads KVRVGQETFYDVYRRKASERQYQRRLEDTSETNLHKLIK.

It belongs to the UQCC5 family. Associates with the mitochondrial ribosome. Interacts with UQCC6. Interacts with MT-CYB; interacts with newly synthesizes MT-CYB. Forms a complex, named COMB/coordinator of mitochondrial CYTB biogenesis, composed of UQCC1, UQCC2, UQCC4, UQCC5 and UQCC6; stabilizes nascent cytochrome b/MT-CYB and promotes its membrane insertion.

It is found in the mitochondrion inner membrane. In terms of biological role, required for the assembly and stability of the mitochondrial ubiquinol-cytochrome c reductase complex (complex III (CIII) or cytochrome b-c1 complex), a multisubunit transmembrane complex that is part of the mitochondrial electron transport chain (ETC) which drives oxidative phosphorylation. Mediates early complex III biogenesis. Participates in regulating the levels of electron transport chain proteins, and therefore energy supply, in response to changes in energy demand. Also required for cytochrome c oxidase complex (complex IV) assembly. This is Ubiquinol-cytochrome c reductase complex assembly factor 5 from Mus musculus (Mouse).